The following is a 264-amino-acid chain: Glutamate racemase (264 aa).

Residues 10–11 and 42–43 contribute to the substrate site; these read DS and YG. Cys73 serves as the catalytic Proton donor/acceptor. Position 74 to 75 (74 to 75) interacts with substrate; it reads NT. Cys181 functions as the Proton donor/acceptor in the catalytic mechanism. 182-183 serves as a coordination point for substrate; the sequence is TH.

It belongs to the aspartate/glutamate racemases family.

It carries out the reaction L-glutamate = D-glutamate. It participates in cell wall biogenesis; peptidoglycan biosynthesis. Provides the (R)-glutamate required for cell wall biosynthesis. This Thermoanaerobacter sp. (strain X514) protein is Glutamate racemase.